A 200-amino-acid polypeptide reads, in one-letter code: NADH-quinone oxidoreductase subunit C (200 aa).

This sequence belongs to the complex I 30 kDa subunit family. In terms of assembly, NDH-1 is composed of 14 different subunits. Subunits NuoB, C, D, E, F, and G constitute the peripheral sector of the complex.

Its subcellular location is the cell inner membrane. It catalyses the reaction a quinone + NADH + 5 H(+)(in) = a quinol + NAD(+) + 4 H(+)(out). Functionally, NDH-1 shuttles electrons from NADH, via FMN and iron-sulfur (Fe-S) centers, to quinones in the respiratory chain. The immediate electron acceptor for the enzyme in this species is believed to be ubiquinone. Couples the redox reaction to proton translocation (for every two electrons transferred, four hydrogen ions are translocated across the cytoplasmic membrane), and thus conserves the redox energy in a proton gradient. The polypeptide is NADH-quinone oxidoreductase subunit C (Burkholderia ambifaria (strain MC40-6)).